Reading from the N-terminus, the 500-residue chain is MSNMQQKTDVILIGAGIMSATLGSLLKELAPEWEIKVFEKLASAGEESSNEWNNAGTGHSALCELNYTSEKSDGSIDISKAVKVNEQFQLSRQFWAYLVKSKLIRNPQDFIMPLPHMSLVQGEKNVQFLKNRFEALSKNPLFQGMEFSDAPETLKKWLPLIMEGRTSNEPMAATKIDSGTDVNFGALTRMLFDYLKTKDVELNYKHSVENIKRTKNGLWEVKVHDMNSGKIEHHTAKFVFIGGGGGSLPLLQKTGIPESKHIGGFPVSGLFMVCKNQKVVEQHHAKVYGKAKVGAPPMSVPHLDTRYIDNKKALLFGPFAGFSPKFLKTGSNLDLIGSVKPNNVLTMLAAGVKEMGLTKYLIQQVMLSHEKRMEELREFIPNAKSEDWDIVVAGQRVQVIKDTDAGGKGTLQFGTEVVSAADGSIAALLGASPGASTAVHVMLEVLEKCFPSRMVEWEGKIKEMIPSYGISLTENPRLFQDLHTSTGRTLGLNEKETVHN.

This sequence belongs to the MQO family. FAD serves as cofactor.

It catalyses the reaction (S)-malate + a quinone = a quinol + oxaloacetate. Its pathway is carbohydrate metabolism; tricarboxylic acid cycle; oxaloacetate from (S)-malate (quinone route): step 1/1. This is Probable malate:quinone oxidoreductase from Bacillus cereus (strain ATCC 10987 / NRS 248).